The primary structure comprises 579 residues: XK-related protein 7 (579 aa).

Positions M1 to G18 are enriched in low complexity. The segment at M1 to P40 is disordered. A compositionally biased stretch (gly residues) spans A19–G31. Helical transmembrane passes span W59–A79 and Y89–F109. The disordered stretch occupies residues G146–S165. The next 5 membrane-spanning stretches (helical) occupy residues L260–Y280, G314–G334, G355–V375, M384–S404, and L415–Y435. The interval A466 to T510 is disordered.

It belongs to the XK family.

The protein resides in the cell membrane. The sequence is that of XK-related protein 7 (XKR7) from Pan troglodytes (Chimpanzee).